A 295-amino-acid polypeptide reads, in one-letter code: UDP-N-acetylenolpyruvoylglucosamine reductase (295 aa).

An FAD-binding PCMH-type domain is found at 23–188; that stretch reads KVGGPADFLA…ISAKFALKPG (166 aa). R167 is a catalytic residue. S217 serves as the catalytic Proton donor. The active site involves E287.

This sequence belongs to the MurB family. FAD serves as cofactor.

It localises to the cytoplasm. The enzyme catalyses UDP-N-acetyl-alpha-D-muramate + NADP(+) = UDP-N-acetyl-3-O-(1-carboxyvinyl)-alpha-D-glucosamine + NADPH + H(+). The protein operates within cell wall biogenesis; peptidoglycan biosynthesis. Its function is as follows. Cell wall formation. In Streptococcus pyogenes serotype M6 (strain ATCC BAA-946 / MGAS10394), this protein is UDP-N-acetylenolpyruvoylglucosamine reductase.